We begin with the raw amino-acid sequence, 2639 residues long: BAH and coiled-coil domain-containing protein 1 (2639 aa).

Disordered regions lie at residues 23–49, 84–107, 188–249, 669–702, 716–746, 939–1047, 1104–1331, 1457–1513, 1582–1666, 1722–1776, 1868–1893, and 2057–2119; these read SAAA…GKYF, SAAS…GSHP, APAH…GKER, FLSS…RQPP, VSRS…PRST, QRAA…QSTA, SDVH…HSSG, QREL…KKVK, KVKS…LGTE, EVKI…RDAL, FDDN…PLSA, and KKVS…DHFL. Composition is skewed to low complexity over residues 24–41 and 84–98; these read AAAA…QPPA and SAAS…SSPP. 2 stretches are compositionally biased toward basic and acidic residues: residues 211–247 and 679–698; these read GPKD…DGGK and ERPD…DGEV. Residue lysine 222 is modified to N6-acetyllysine. The segment covering 946-964 has biased composition (basic and acidic residues); sequence RKPEDQHLDLEEPAQEKAP. Residues 972 to 988 are compositionally biased toward low complexity; the sequence is ALTPTAPGAPSPAAGPT. The span at 989 to 1013 shows a compositional bias: pro residues; the sequence is KLPPCCHPPDPKPPASSPTPPPRPS. Residues 1106–1122 are compositionally biased toward polar residues; sequence VHSSNLEDPETMQTTAP. The span at 1182–1198 shows a compositional bias: low complexity; it reads LEGLQELQCAALLEAGG. Positions 1212 to 1221 are enriched in basic and acidic residues; it reads AREERSREEG. A compositionally biased stretch (acidic residues) spans 1244–1275; it reads LEDEGEQPAPEEDELEEDELGQQSMEDSEEDC. Residues 1307 to 1324 are compositionally biased toward pro residues; sequence DSPPDPQPPAASGPPSTV. Positions 1439–1473 form a coiled coil; sequence EVGMRVRLAELQRRYKEKQRELARLQRKHDHERDE. Basic and acidic residues predominate over residues 1457–1475; it reads QRELARLQRKHDHERDESS. Positions 1478–1492 are enriched in basic residues; that stretch reads PARRGPGRPRKRKHS. Over residues 1751-1761 the composition is skewed to basic residues; sequence GKKKAKGKAKG. The span at 1868 to 1888 shows a compositional bias: acidic residues; the sequence is FDDNSSFSEEEEDEEEEEEDS. Serine 2274 is subject to Phosphoserine. 3 disordered regions span residues 2317–2336, 2348–2383, and 2432–2472; these read SDCH…LAAG, SSSS…SDDE, and GAGS…ENRP. The segment covering 2348–2371 has biased composition (low complexity); the sequence is SSSSSGSSTSSSSGSVSTSSLCSS. A compositionally biased stretch (acidic residues) spans 2372–2383; it reads DNEDSSYSSDDE. The segment covering 2432-2442 has biased composition (low complexity); sequence GAGSGPSSSSK. The 121-residue stretch at 2513-2633 folds into the BAH domain; that stretch reads ETLRVGDCAV…PTTGRLVTAD (121 aa).

This Homo sapiens (Human) protein is BAH and coiled-coil domain-containing protein 1.